The primary structure comprises 835 residues: Leucine--tRNA ligase (835 aa).

The 'HIGH' region motif lies at P36–H46. The 'KMSKS' region motif lies at K602–S606. Position 605 (K605) interacts with ATP.

Belongs to the class-I aminoacyl-tRNA synthetase family.

It localises to the cytoplasm. The enzyme catalyses tRNA(Leu) + L-leucine + ATP = L-leucyl-tRNA(Leu) + AMP + diphosphate. This Rickettsia conorii (strain ATCC VR-613 / Malish 7) protein is Leucine--tRNA ligase.